The sequence spans 236 residues: uncharacterized protein (236 aa).

Asp-22, Asn-49, and Lys-82 together coordinate NADP(+). Residues Ser-100 and Tyr-114 each act as proton donor in the active site. NADP(+) is bound by residues Tyr-114 and Lys-118. Residue Lys-118 is the Lowers pKa of active site Tyr of the active site.

Belongs to the short-chain dehydrogenases/reductases (SDR) family.

It is found in the cytoplasm. It localises to the nucleus. This is an uncharacterized protein from Schizosaccharomyces pombe (strain 972 / ATCC 24843) (Fission yeast).